The primary structure comprises 430 residues: Adenylosuccinate synthetase (430 aa).

Residues 13–19 (GDEGKGK) and 41–43 (GHT) each bind GTP. Asp-14 functions as the Proton acceptor in the catalytic mechanism. Asp-14 and Gly-41 together coordinate Mg(2+). IMP-binding positions include 14–17 (DEGK), 39–42 (NAGH), Thr-130, Arg-144, Gln-225, Thr-240, and Arg-304. Catalysis depends on His-42, which acts as the Proton donor. Residue 300–306 (STTGRAR) participates in substrate binding. GTP-binding positions include Arg-306, 332–334 (KLD), and 414–416 (STG).

It belongs to the adenylosuccinate synthetase family. As to quaternary structure, homodimer. The cofactor is Mg(2+).

It localises to the cytoplasm. The enzyme catalyses IMP + L-aspartate + GTP = N(6)-(1,2-dicarboxyethyl)-AMP + GDP + phosphate + 2 H(+). It functions in the pathway purine metabolism; AMP biosynthesis via de novo pathway; AMP from IMP: step 1/2. Plays an important role in the de novo pathway of purine nucleotide biosynthesis. Catalyzes the first committed step in the biosynthesis of AMP from IMP. This Pseudomonas putida (strain ATCC 700007 / DSM 6899 / JCM 31910 / BCRC 17059 / LMG 24140 / F1) protein is Adenylosuccinate synthetase.